The primary structure comprises 195 residues: Large ribosomal subunit protein bL9 (195 aa).

It belongs to the bacterial ribosomal protein bL9 family.

Functionally, binds to the 23S rRNA. This chain is Large ribosomal subunit protein bL9, found in Rhodopseudomonas palustris (strain TIE-1).